A 213-amino-acid chain; its full sequence is Ferric nitrobindin-like protein (213 aa).

The segment at 17–42 (VNLAAEQSKSTSDKNLPEFGDMPIPD) is disordered. Residues 65 to 71 (GVWRGQG) carry the GXWXGXG motif.

It belongs to the nitrobindin family.

The sequence is that of Ferric nitrobindin-like protein from Corynebacterium jeikeium (strain K411).